A 247-amino-acid polypeptide reads, in one-letter code: 3-oxoacyl-[acyl-carrier-protein] reductase FabG (247 aa).

Residues 12–15 (GASR), Thr-37, 62–63 (DV), and Asn-89 each bind NADP(+). Ser-141 lines the substrate pocket. Tyr-154 functions as the Proton acceptor in the catalytic mechanism. Residues 154 to 158 (YAAAK) and Ile-187 each bind NADP(+).

Belongs to the short-chain dehydrogenases/reductases (SDR) family. As to quaternary structure, homotetramer.

The catalysed reaction is a (3R)-hydroxyacyl-[ACP] + NADP(+) = a 3-oxoacyl-[ACP] + NADPH + H(+). Its pathway is lipid metabolism; fatty acid biosynthesis. Its function is as follows. Catalyzes the NADPH-dependent reduction of beta-ketoacyl-ACP substrates to beta-hydroxyacyl-ACP products, the first reductive step in the elongation cycle of fatty acid biosynthesis. The polypeptide is 3-oxoacyl-[acyl-carrier-protein] reductase FabG (fabG) (Pseudomonas aeruginosa (strain ATCC 15692 / DSM 22644 / CIP 104116 / JCM 14847 / LMG 12228 / 1C / PRS 101 / PAO1)).